The sequence spans 302 residues: Quinolinate synthase (302 aa).

The iminosuccinate site is built by His-25 and Ser-42. A [4Fe-4S] cluster-binding site is contributed by Cys-87. Iminosuccinate contacts are provided by residues 113-115 (YVN) and Ser-130. Cys-172 contacts [4Fe-4S] cluster. Residues 198–200 (HPE) and Thr-215 each bind iminosuccinate. A [4Fe-4S] cluster-binding site is contributed by Cys-260.

This sequence belongs to the quinolinate synthase family. Type 2 subfamily. The cofactor is [4Fe-4S] cluster.

The protein localises to the cytoplasm. The catalysed reaction is iminosuccinate + dihydroxyacetone phosphate = quinolinate + phosphate + 2 H2O + H(+). The protein operates within cofactor biosynthesis; NAD(+) biosynthesis; quinolinate from iminoaspartate: step 1/1. Functionally, catalyzes the condensation of iminoaspartate with dihydroxyacetone phosphate to form quinolinate. This Methanoregula boonei (strain DSM 21154 / JCM 14090 / 6A8) protein is Quinolinate synthase.